We begin with the raw amino-acid sequence, 119 residues long: MRNVYDIAYELATALKESNEFKRFKAAKEKIEKDEKLKQMISDFKKKQFELEQKRLKGEEVTSSDVYSLQQLYQIISLNPDIEEYLSAEMMLAKIIADISKIIADSIEFKDELWGFADK.

The protein belongs to the UPF0342 family.

The polypeptide is UPF0342 protein Athe_0692 (Caldicellulosiruptor bescii (strain ATCC BAA-1888 / DSM 6725 / KCTC 15123 / Z-1320) (Anaerocellum thermophilum)).